A 252-amino-acid polypeptide reads, in one-letter code: MLAKRIIPCLDVNKGRVVKGVNFVNLVDAGDPVEAAKAYDEAGADELVFLDITASAEERDIILDVVKQTAETVFMPLTVGGGVRSLEDVRKLLESGADKVSINTAAVKNPSLVESAAVRFGSSTIVVAIDAKRTGKDRWEVYINGGRTATGIDAVEWAKAVEDLGAGEILLTSMDRDGTKNGYDIALTRAISEAVSIPVIASGGAGKKEDFYDAFTEGKADAALAASLFHFKELTIGELKEFLKEKGIPVRL.

Residues Asp-11 and Asp-130 contribute to the active site.

This sequence belongs to the HisA/HisF family. In terms of assembly, heterodimer of HisH and HisF.

Its subcellular location is the cytoplasm. It catalyses the reaction 5-[(5-phospho-1-deoxy-D-ribulos-1-ylimino)methylamino]-1-(5-phospho-beta-D-ribosyl)imidazole-4-carboxamide + L-glutamine = D-erythro-1-(imidazol-4-yl)glycerol 3-phosphate + 5-amino-1-(5-phospho-beta-D-ribosyl)imidazole-4-carboxamide + L-glutamate + H(+). It participates in amino-acid biosynthesis; L-histidine biosynthesis; L-histidine from 5-phospho-alpha-D-ribose 1-diphosphate: step 5/9. Functionally, IGPS catalyzes the conversion of PRFAR and glutamine to IGP, AICAR and glutamate. The HisF subunit catalyzes the cyclization activity that produces IGP and AICAR from PRFAR using the ammonia provided by the HisH subunit. This is Imidazole glycerol phosphate synthase subunit HisF from Persephonella marina (strain DSM 14350 / EX-H1).